The chain runs to 468 residues: Glutamate--tRNA ligase (468 aa).

Residues 9-19 carry the 'HIGH' region motif; sequence PSPTGSIHIGN. Residues 239 to 243 carry the 'KMSKS' region motif; sequence KLSKR. Lys242 provides a ligand contact to ATP.

Belongs to the class-I aminoacyl-tRNA synthetase family. Glutamate--tRNA ligase type 1 subfamily. Monomer.

The protein resides in the cytoplasm. The enzyme catalyses tRNA(Glu) + L-glutamate + ATP = L-glutamyl-tRNA(Glu) + AMP + diphosphate. In terms of biological role, catalyzes the attachment of glutamate to tRNA(Glu) in a two-step reaction: glutamate is first activated by ATP to form Glu-AMP and then transferred to the acceptor end of tRNA(Glu). The chain is Glutamate--tRNA ligase from Blochmanniella pennsylvanica (strain BPEN).